We begin with the raw amino-acid sequence, 525 residues long: MTENIHKHRILILDFGSQYTQLVARRVRELGVYCELWAWDVTEAQIRDFNPSGIILSGGPESTTEENSPRAPQYVFEAGVPVFGVCYGMQTMAMQLGGHVEASNEREFGYAQVEVVNDSALVRGIEDALTADGKPLLDVWMSHGDKVTAIPSDFITVASTESCPFAIMANEEKRFYGVQFHPEVTHTRQGMRMLERFVRDICQCEALWTPAKIIDDAVARIREQVGDDKVILGLSGGVDSSVTAMLLHRAIGKNLTCVFVDNGLLRLNEAEQVLDMFGDHFGLNIVHVPAEDRFLSALAGENDPEAKRKIIGRVFVEVFDEEALKLEDVKWLAQGTIYPDVIESAASATGKAHVIKSHHNVGGLPKEMKMGLVEPLKELFKDEVRKIGLELGLPYDMLYRHPFPGPGLGVRVLGEVKKEYCDLLRRVDAIFIEELRKADLYDKVSQAFTVFLPVRSVGVMGDGRKYDWVVSLRAVETIDFMTAHWAHLPYDFLGRVSNRIINEVNGISRVVYDISGKPPATIEWE.

Residues R9 to L207 form the Glutamine amidotransferase type-1 domain. The active-site Nucleophile is C86. Catalysis depends on residues H181 and E183. Residues W208 to R400 form the GMPS ATP-PPase domain. S235–S241 contributes to the ATP binding site.

Homodimer.

It carries out the reaction XMP + L-glutamine + ATP + H2O = GMP + L-glutamate + AMP + diphosphate + 2 H(+). It participates in purine metabolism; GMP biosynthesis; GMP from XMP (L-Gln route): step 1/1. Its function is as follows. Catalyzes the synthesis of GMP from XMP. This is GMP synthase [glutamine-hydrolyzing] from Shigella dysenteriae serotype 1 (strain Sd197).